The chain runs to 165 residues: Polcalcin Cup a 4 (165 aa).

EF-hand domains lie at 22-57 (QSVH…MGSE), 58-86 (VDEA…FVDL), 91-126 (ATVK…VGEP), and 127-162 (CTIE…EMTD). Ca(2+) is bound by residues aspartate 35, asparagine 37, aspartate 39, lysine 41, glutamate 46, aspartate 71, aspartate 73, aspartate 75, tyrosine 77, glutamate 82, aspartate 104, aspartate 106, asparagine 108, threonine 110, glutamate 115, aspartate 140, asparagine 142, aspartate 144, and glutamate 151.

As to quaternary structure, may exist as monomer and dimer. Expressed in mature pollen grains.

This chain is Polcalcin Cup a 4, found in Hesperocyparis arizonica (Arizona cypress).